We begin with the raw amino-acid sequence, 1088 residues long: Tyrocidine synthase 1 (1088 aa).

Residues P528 to T602 enclose the Carrier domain. S563 is subject to O-(pantetheine 4'-phosphoryl)serine.

This sequence belongs to the ATP-dependent AMP-binding enzyme family. Large multienzyme complex of TycA, TycB and TycC. Requires pantetheine 4'-phosphate as cofactor.

It catalyses the reaction L-phenylalanine + ATP + H2O = D-phenylalanine + AMP + diphosphate + H(+). It participates in antibiotic biosynthesis; tyrocidine biosynthesis. Functionally, in the first step of peptide synthesis this enzyme activates phenylalanine and racemizes it to the D-isomer. The sequence is that of Tyrocidine synthase 1 (tycA) from Brevibacillus parabrevis.